Here is a 210-residue protein sequence, read N- to C-terminus: Claudin-4 (210 aa).

The Cytoplasmic segment spans residues Met1–Gln7. The interval Met1–Lys103 is interaction with EPHA2. A helical membrane pass occupies residues Val8–Pro28. Residues Met29–Arg81 are Extracellular-facing. A disulfide bridge connects residues Cys54 and Cys64. The helical transmembrane segment at Ala82–Gly102 threads the bilayer. The Cytoplasmic portion of the chain corresponds to Lys103–Lys116. A helical membrane pass occupies residues Ile117–Ser137. The Extracellular segment spans residues Trp138 to Met160. Residues Gly161–Leu181 form a helical membrane-spanning segment. Residues Cys182–Val210 are Cytoplasmic-facing. The residue at position 209 (Tyr209) is a Phosphotyrosine; by EPHA2. Residues Tyr209–Val210 are interactions with TJP1, TJP2 and TJP3.

This sequence belongs to the claudin family. In terms of assembly, can form heteropolymeric strands with other claudins. Interacts with CLDN8. Interacts with CLDN1. Directly interacts with TJP1/ZO-1, TJP2/ZO-2 and TJP3/ZO-3. Interacts with EPHA2; phosphorylates CLDN4 and may regulate tight junctions. Phosphorylated. Phosphorylation by EPHA2 is stimulated by EFNA1 and alters interaction with TJP1. In terms of tissue distribution, expressed primarily in lung and kidney. Present in both cortical and medullar collecting ducts (at protein level).

It localises to the cell junction. The protein resides in the tight junction. Its subcellular location is the cell membrane. The catalysed reaction is chloride(in) = chloride(out). It carries out the reaction bromide(in) = bromide(out). It catalyses the reaction iodide(out) = iodide(in). The enzyme catalyses fluoride(in) = fluoride(out). In terms of biological role, can associate with other claudins to regulate tight junction structural and functional strand dynamics. May coassemble with CLDN8 into tight junction strands containing anion-selective channels that convey paracellular chloride permeability in renal collecting ducts. May integrate into CLDN3 strands to modulate localized tight junction barrier properties. May disrupt strand assembly of channel-forming CLDN2 and CLDN15 and inhibit cation conductance. Cannot form tight junction strands on its own. The polypeptide is Claudin-4 (Mus musculus (Mouse)).